The chain runs to 315 residues: 2-oxoglutarate and iron-dependent oxygenase domain-containing protein 3 (315 aa).

Residues 1–32 are disordered; the sequence is MAPQRRGPPRVPEGNSAAERRHANSTKKDRLP. Residues 1 to 41 are Cytoplasmic-facing; the sequence is MAPQRRGPPRVPEGNSAAERRHANSTKKDRLPQEAQRTWLR. A compositionally biased stretch (basic and acidic residues) spans 18-32; that stretch reads AERRHANSTKKDRLP. A helical; Signal-anchor for type II membrane protein transmembrane segment spans residues 42 to 62; that stretch reads IVALGVSLALVTFLLWSSAGI. At 63–315 the chain is on the lumenal side; that stretch reads DDDVAEVVAH…DHGIEDPVLT (253 aa). One can recognise a Fe2OG dioxygenase domain in the interval 203–305; the sequence is KPTFFSRINS…AITIAFTCNP (103 aa). Asparagine 211 carries an N-linked (GlcNAc...) asparagine glycan. Residues histidine 226 and aspartate 228 each coordinate Fe cation. N-linked (GlcNAc...) asparagine glycosylation is present at asparagine 263. Histidine 284 is a Fe cation binding site. Arginine 294 is a catalytic residue. Position 294 (arginine 294) interacts with 2-oxoglutarate.

It belongs to the OGFOD3 family. It depends on Fe(2+) as a cofactor. L-ascorbate is required as a cofactor.

The protein resides in the membrane. In Rattus norvegicus (Rat), this protein is 2-oxoglutarate and iron-dependent oxygenase domain-containing protein 3 (Ogfod3).